The sequence spans 225 residues: Uracil-DNA glycosylase (225 aa).

Residue Asp68 is the Proton acceptor of the active site.

The protein belongs to the uracil-DNA glycosylase (UDG) superfamily. UNG family.

It is found in the cytoplasm. It carries out the reaction Hydrolyzes single-stranded DNA or mismatched double-stranded DNA and polynucleotides, releasing free uracil.. In terms of biological role, excises uracil residues from the DNA which can arise as a result of misincorporation of dUMP residues by DNA polymerase or due to deamination of cytosine. The chain is Uracil-DNA glycosylase from Parafrankia sp. (strain EAN1pec).